We begin with the raw amino-acid sequence, 678 residues long: NADPH--cytochrome P450 reductase (678 aa).

Residue Gly-2 is modified to N-acetylglycine. At 2–22 the chain is on the lumenal side; sequence GDSNVDTGTTTSEMVAEEVSL. The helical transmembrane segment at 23-43 threads the bilayer; it reads FSATDMVLFSLIVGLLTYWFI. Residues 44-678 are Cytoplasmic-facing; that stretch reads FRKKKDEVPE…KGRYSLDVWS (635 aa). Ser-63 carries the phosphoserine modification. Residues 80-224 enclose the Flavodoxin-like domain; that stretch reads IIVFYGSQTG…DFITWREQFW (145 aa). FMN is bound by residues 86–91, 138–141, 173–182, and Asp-208; these read SQTGTA, ATYG, and LGNKTYEHFN. In terms of domain architecture, FAD-binding FR-type spans 279 to 521; that stretch reads KNPFLAVVTT…FVRKSQFRLP (243 aa). Arg-298 lines the NADP(+) pocket. Residues Arg-424, 454-457, 472-474, Tyr-478, and 488-491 each bind FAD; these read RYYS, CAV, and GVAT. NADP(+)-binding positions include Thr-535, 596 to 597, 602 to 606, and Asp-639; these read SR and KVYVQ. Trp-677 is an FAD binding site.

It belongs to the NADPH--cytochrome P450 reductase family. The protein in the N-terminal section; belongs to the flavodoxin family. In the C-terminal section; belongs to the flavoprotein pyridine nucleotide cytochrome reductase family. Requires FAD as cofactor. It depends on FMN as a cofactor.

Its subcellular location is the endoplasmic reticulum membrane. The enzyme catalyses 2 oxidized [cytochrome P450] + NADPH = 2 reduced [cytochrome P450] + NADP(+) + H(+). This enzyme is required for electron transfer from NADP to cytochrome P450 in microsomes. It can also provide electron transfer to heme oxygenase and cytochrome B5. The polypeptide is NADPH--cytochrome P450 reductase (Sus scrofa (Pig)).